The sequence spans 479 residues: RAC-gamma serine/threonine-protein kinase (479 aa).

Ser2 carries the N-acetylserine modification. The 103-residue stretch at 5–107 (TIVKEGWVQK…WTEAIQAVAD (103 aa)) folds into the PH domain. Cys59 and Cys76 are disulfide-bonded. In terms of domain architecture, Protein kinase spans 148-405 (FDYLKLLGKG…AKEIMRHSFF (258 aa)). Residues 154 to 162 (LGKGTFGKV) and Lys177 contribute to the ATP site. Asp271 acts as the Proton acceptor in catalysis. Cys293 and Cys307 are disulfide-bonded. The O-linked (GlcNAc) threonine glycan is linked to Thr302. Position 305 is a phosphothreonine; by PDPK1 (Thr305). Thr309 carries O-linked (GlcNAc) threonine glycosylation. Positions 406–479 (SGVNWQDVYD…QFSYSASGRE (74 aa)) constitute an AGC-kinase C-terminal domain. At Thr447 the chain carries Phosphothreonine. Residues 458–479 (DCMDNERRPHFPQFSYSASGRE) form a disordered region. A Phosphoserine; by PKC/PRKCZ modification is found at Ser472. Ser472 is a glycosylation site (O-linked (GlcNAc) serine; alternate).

The protein belongs to the protein kinase superfamily. AGC Ser/Thr protein kinase family. RAC subfamily. In terms of assembly, interacts (via PH domain) with TCL1A; this enhances AKT3 phosphorylation and activation. Interacts with TRAF6. Interacts with KCTD20. Interacts with BTBD10. In terms of processing, phosphorylation on Thr-305 and Ser-472 is required for full activity. Phosphorylation of the activation loop at Thr-305 by PDPK1/PDK1 is a prerequisite for full activation. Phosphorylation at Ser-472 by mTORC2 in response to growth factors plays a key role in AKT1 activation by facilitating subsequent phosphorylation of the activation loop by PDPK1/PDK1. Ubiquitinated. When fully phosphorylated and translocated into the nucleus, undergoes 'Lys-48'-polyubiquitination catalyzed by TTC3, leading to its degradation by the proteasome. Post-translationally, O-GlcNAcylation at Thr-302 and Thr-309 inhibits activating phosphorylation at Thr-305 via disrupting the interaction between AKT and PDPK1/PDK1. As to expression, in adult tissues, it is highly expressed in brain, lung and kidney, but weakly in heart, testis and liver. In fetal tissues, it is highly expressed in heart, liver and brain and not at all in kidney.

Its subcellular location is the nucleus. The protein localises to the cytoplasm. It localises to the membrane. The catalysed reaction is L-seryl-[protein] + ATP = O-phospho-L-seryl-[protein] + ADP + H(+). The enzyme catalyses L-threonyl-[protein] + ATP = O-phospho-L-threonyl-[protein] + ADP + H(+). With respect to regulation, two specific sites, one in the kinase domain (Thr-305) and the other in the C-terminal regulatory region (Ser-472), need to be phosphorylated for its full activation. IGF-1 leads to the activation of AKT3, which may play a role in regulating cell survival. Functionally, AKT3 is one of 3 closely related serine/threonine-protein kinases (AKT1, AKT2 and AKT3) called the AKT kinase, and which regulate many processes including metabolism, proliferation, cell survival, growth and angiogenesis. This is mediated through serine and/or threonine phosphorylation of a range of downstream substrates. Over 100 substrate candidates have been reported so far, but for most of them, no isoform specificity has been reported. AKT3 is the least studied AKT isoform. It plays an important role in brain development and is crucial for the viability of malignant glioma cells. AKT3 isoform may also be the key molecule in up-regulation and down-regulation of MMP13 via IL13. Required for the coordination of mitochondrial biogenesis with growth factor-induced increases in cellular energy demands. Down-regulation by RNA interference reduces the expression of the phosphorylated form of BAD, resulting in the induction of caspase-dependent apoptosis. The protein is RAC-gamma serine/threonine-protein kinase (AKT3) of Homo sapiens (Human).